The primary structure comprises 227 residues: Cytochrome c oxidase subunit 2 (227 aa).

The Mitochondrial intermembrane portion of the chain corresponds to 1–14 (MAYPLQLGLQDATS). A helical transmembrane segment spans residues 15 to 45 (PIMEELTSFHDHTLMIVFLISSLVLYIISSM). Residues 46-59 (LTTKMTHTNTMDAQ) lie on the Mitochondrial matrix side of the membrane. A helical membrane pass occupies residues 60 to 87 (GVETIWTILPAAILVLIALPSLRILYMM). At 88-227 (DEINNPALTV…HFENWSASMI (140 aa)) the chain is on the mitochondrial intermembrane side. Histidine 161, cysteine 196, glutamate 198, cysteine 200, histidine 204, and methionine 207 together coordinate Cu cation. Glutamate 198 serves as a coordination point for Mg(2+).

This sequence belongs to the cytochrome c oxidase subunit 2 family. As to quaternary structure, component of the cytochrome c oxidase (complex IV, CIV), a multisubunit enzyme composed of 14 subunits. The complex is composed of a catalytic core of 3 subunits MT-CO1, MT-CO2 and MT-CO3, encoded in the mitochondrial DNA, and 11 supernumerary subunits COX4I, COX5A, COX5B, COX6A, COX6B, COX6C, COX7A, COX7B, COX7C, COX8 and NDUFA4, which are encoded in the nuclear genome. The complex exists as a monomer or a dimer and forms supercomplexes (SCs) in the inner mitochondrial membrane with NADH-ubiquinone oxidoreductase (complex I, CI) and ubiquinol-cytochrome c oxidoreductase (cytochrome b-c1 complex, complex III, CIII), resulting in different assemblies (supercomplex SCI(1)III(2)IV(1) and megacomplex MCI(2)III(2)IV(2)). Found in a complex with TMEM177, COA6, COX18, COX20, SCO1 and SCO2. Interacts with TMEM177 in a COX20-dependent manner. Interacts with COX20. Interacts with COX16. Cu cation is required as a cofactor.

The protein resides in the mitochondrion inner membrane. The enzyme catalyses 4 Fe(II)-[cytochrome c] + O2 + 8 H(+)(in) = 4 Fe(III)-[cytochrome c] + 2 H2O + 4 H(+)(out). Component of the cytochrome c oxidase, the last enzyme in the mitochondrial electron transport chain which drives oxidative phosphorylation. The respiratory chain contains 3 multisubunit complexes succinate dehydrogenase (complex II, CII), ubiquinol-cytochrome c oxidoreductase (cytochrome b-c1 complex, complex III, CIII) and cytochrome c oxidase (complex IV, CIV), that cooperate to transfer electrons derived from NADH and succinate to molecular oxygen, creating an electrochemical gradient over the inner membrane that drives transmembrane transport and the ATP synthase. Cytochrome c oxidase is the component of the respiratory chain that catalyzes the reduction of oxygen to water. Electrons originating from reduced cytochrome c in the intermembrane space (IMS) are transferred via the dinuclear copper A center (CU(A)) of subunit 2 and heme A of subunit 1 to the active site in subunit 1, a binuclear center (BNC) formed by heme A3 and copper B (CU(B)). The BNC reduces molecular oxygen to 2 water molecules using 4 electrons from cytochrome c in the IMS and 4 protons from the mitochondrial matrix. This is Cytochrome c oxidase subunit 2 (MT-CO2) from Acomys ignitus (Fiery spiny mouse).